The chain runs to 111 residues: MEIIKSILYFILAGIFEIGGGYLIWIWLRDGKSYLYGVIGAVILILYGIIPTLQPSNADFGKVYAAYGGIFIVMSILWGWKIDNIVPDKFDLIGGCIALVGVIVIMYAPRG.

Helical transmembrane passes span 7 to 27, 33 to 53, 60 to 80, and 85 to 105; these read ILYF…IWIW, SYLY…IPTL, FGKV…LWGW, and IVPD…VIVI.

It belongs to the UPF0060 family.

It is found in the cell membrane. This Clostridium beijerinckii (strain ATCC 51743 / NCIMB 8052) (Clostridium acetobutylicum) protein is UPF0060 membrane protein Cbei_2176.